The chain runs to 281 residues: Ribosomal RNA small subunit methyltransferase A (281 aa).

6 residues coordinate S-adenosyl-L-methionine: N35, L37, G62, E83, D107, and N125.

Belongs to the class I-like SAM-binding methyltransferase superfamily. rRNA adenine N(6)-methyltransferase family. RsmA subfamily.

It is found in the cytoplasm. It catalyses the reaction adenosine(1518)/adenosine(1519) in 16S rRNA + 4 S-adenosyl-L-methionine = N(6)-dimethyladenosine(1518)/N(6)-dimethyladenosine(1519) in 16S rRNA + 4 S-adenosyl-L-homocysteine + 4 H(+). In terms of biological role, specifically dimethylates two adjacent adenosines (A1518 and A1519) in the loop of a conserved hairpin near the 3'-end of 16S rRNA in the 30S particle. May play a critical role in biogenesis of 30S subunits. In Deinococcus geothermalis (strain DSM 11300 / CIP 105573 / AG-3a), this protein is Ribosomal RNA small subunit methyltransferase A.